Reading from the N-terminus, the 757-residue chain is Xylosyl- and glucuronyltransferase LARGE1 (757 aa).

The Cytoplasmic segment spans residues 1–10 (MLGMCRGRRK). The helical; Signal-anchor for type II membrane protein transmembrane segment at 11–31 (FVAASLALIFIPALTWLYLSS) threads the bilayer. At 32–757 (ANITVKPLPL…LKYMTVDNNS (726 aa)) the chain is on the lumenal side. Positions 50 to 82 (AVVGAAAEHQSLELRLRDVEEHNNALRREISRT) form a coiled coil. A disordered region spans residues 76–127 (RREISRTPRVPTHSSHPSSSRHGNQLHTHSTEEGTGDSEAKKGAAAGNSSDC). Positions 82–97 (TPRVPTHSSHPSSSRH) are enriched in low complexity. Residues Asn123 and Asn149 are each glycosylated (N-linked (GlcNAc...) asparagine). Residues 139-414 (IHIAIVCAGY…FLEYDGNLLR (276 aa)) form a xylosyltransferase activity region. Mn(2+) is bound by residues Asp243 and Asp245. Asn273 is a glycosylation site (N-linked (GlcNAc...) asparagine). The glucuronyltransferase activity stretch occupies residues 415–757 (RELFGCPSET…LKYMTVDNNS (343 aa)). 2 residues coordinate Mn(2+): Asp564 and Asp566. A glycan (N-linked (GlcNAc...) asparagine) is linked at Asn738.

In the C-terminal section; belongs to the glycosyltransferase 49 family. The protein in the N-terminal section; belongs to the glycosyltransferase 8 family. Mn(2+) is required as a cofactor.

It localises to the golgi apparatus membrane. The catalysed reaction is 3-O-[beta-D-GlcA-(1-&gt;3)-beta-D-Xyl-(1-&gt;4)-Rib-ol-P-Rib-ol-P-3-beta-D-GalNAc-(1-&gt;3)-beta-D-GlcNAc-(1-&gt;4)-(O-6-P-alpha-D-Man)]-Thr-[protein] + UDP-alpha-D-xylose = 3-O-[alpha-D-Xyl-(1-&gt;3)-beta-D-GlcA-(1-&gt;4)-beta-D-Xyl-(1-&gt;4)-Rib-ol-P-Rib-ol-P-3-beta-D-GalNAc-(1-&gt;3)-beta-D-GlcNAc-(1-&gt;4)-(O-6-P-alpha-D-Man)]-Thr-[protein] + UDP + H(+). It catalyses the reaction 3-O-{(1-&gt;[3)-alpha-D-Xyl-(1-&gt;3)-beta-D-GlcA-(1-&gt;](n)-4)-beta-D-Xyl-(1-&gt;4)-Rib-ol-P-Rib-ol-P-3-beta-D-GalNAc-(1-&gt;3)-beta-D-GlcNAc-(1-&gt;4)-O-6-P-alpha-D-Man}-L-Thr-[protein] + UDP-alpha-D-glucuronate = 3-O-{beta-D-GlcA-(1-&gt;[3)-alpha-D-Xyl-(1-&gt;3)-beta-D-GlcA-(1-&gt;](n)-4)-beta-D-Xyl-(1-&gt;4)-Rib-ol-P-Rib-ol-P-3-beta-D-GalNAc-(1-&gt;3)-beta-D-GlcNAc-(1-&gt;4)-O-6-P-alpha-D-Man}-L-Thr-[protein] + UDP + H(+). The enzyme catalyses 3-O-{beta-D-GlcA-(1-&gt;[3)-alpha-D-Xyl-(1-&gt;3)-beta-D-GlcA-(1-&gt;](n)-4)-beta-D-Xyl-(1-&gt;4)-Rib-ol-P-Rib-ol-P-3-beta-D-GalNAc-(1-&gt;3)-beta-D-GlcNAc-(1-&gt;4)-O-6-P-alpha-D-Man}-L-Thr-[protein] + UDP-alpha-D-xylose = 3-O-{(1-&gt;[3)-alpha-D-Xyl-(1-&gt;3)-beta-D-GlcA-(1-&gt;](n+1)-4)-beta-D-Xyl-(1-&gt;4)-Rib-ol-P-Rib-ol-P-3-beta-D-GalNAc-(1-&gt;3)-beta-D-GlcNAc-(1-&gt;4)-O-6-P-alpha-D-Man}-L-Thr-[protein] + UDP + H(+). It participates in protein modification; protein glycosylation. Functionally, bifunctional glycosyltransferase with both alpha-1,3-xylosyltransferase and beta-1,3-glucuronyltransferase activities involved in the maturation of alpha-dystroglycan (DAG1) by glycosylation leading to DAG1 binding to laminin G-like domain-containing extracellular proteins with high affinity. Elongates the glucuronyl-beta-1,4-xylose-beta disaccharide primer structure initiated by B4GAT1 by adding repeating units [-3-Xylose-alpha-1,3-GlcA-beta-1-] to produce a heteropolysaccharide. Requires the phosphorylation of core M3 (O-mannosyl trisaccharide) by POMK to elongate the glucuronyl-beta-1,4-xylose-beta disaccharide primer. Plays a key role in skeletal muscle function and regeneration. The sequence is that of Xylosyl- and glucuronyltransferase LARGE1 from Danio rerio (Zebrafish).